The chain runs to 1823 residues: THO complex subunit 2 (1823 aa).

Residues 935–1003 (NRYESEISKQ…RRRLSREKDT (69 aa)) are a coiled coil. The Nuclear localization signal motif lies at 964–969 (KRKKEK). 2 disordered regions span residues 1244–1382 (LVGV…KDLN) and 1394–1823 (ALSS…GSRE). Basic and acidic residues-rich tracts occupy residues 1272-1283 (QMLKTKPLDGRT), 1312-1330 (KSME…DENP), and 1356-1367 (AKQDFGKDDGKS). Positions 1394-1409 (ALSSTAANGSIATGSS) are enriched in polar residues. Positions 1432–1596 (PRHEIVTSVR…EKSHPDDHFH (165 aa)) are enriched in basic and acidic residues. Pro residues predominate over residues 1600 to 1610 (LPPPPPLPPNI). 4 stretches are compositionally biased toward basic and acidic residues: residues 1616 to 1625 (AAKEDLERRA), 1636 to 1648 (PRHE…RSEE), 1655 to 1706 (DDAK…FEAS), and 1768 to 1785 (LGKE…DPIA). Phosphoserine is present on residues S1646 and S1696. Positions 1802 to 1816 (MTVNGKTTRGEQSGS) are enriched in polar residues.

It belongs to the THOC2 family. In terms of assembly, component of the THO complex, which is composed of THO1, THO2, THO3, THO5, THO6 and THO7.

Its subcellular location is the nucleus. Acts as a component of the THO subcomplex of the TREX complex which is thought to couple mRNA transcription, processing and nuclear export. This is THO complex subunit 2 (THO2) from Arabidopsis thaliana (Mouse-ear cress).